A 558-amino-acid chain; its full sequence is Glucose-6-phosphate isomerase (558 aa).

The active-site Proton donor is the Glu-362. Active-site residues include His-393 and Lys-523.

Belongs to the GPI family.

The protein resides in the cytoplasm. It catalyses the reaction alpha-D-glucose 6-phosphate = beta-D-fructose 6-phosphate. It participates in carbohydrate degradation; glycolysis; D-glyceraldehyde 3-phosphate and glycerone phosphate from D-glucose: step 2/4. The sequence is that of Glucose-6-phosphate isomerase (Pgi) from Drosophila yakuba (Fruit fly).